A 938-amino-acid polypeptide reads, in one-letter code: Isoleucine--tRNA ligase (938 aa).

The short motif at 58-68 is the 'HIGH' region element; it reads PYANGSIHIGH. Lys183 is modified (N6-acetyllysine). Residue Glu561 coordinates L-isoleucyl-5'-AMP. Positions 602–606 match the 'KMSKS' region motif; it reads KMSKS. Residue Lys605 coordinates ATP. Residues Cys901, Cys904, Cys921, and Cys924 each coordinate Zn(2+).

The protein belongs to the class-I aminoacyl-tRNA synthetase family. IleS type 1 subfamily. Monomer. The cofactor is Zn(2+).

The protein localises to the cytoplasm. The catalysed reaction is tRNA(Ile) + L-isoleucine + ATP = L-isoleucyl-tRNA(Ile) + AMP + diphosphate. Catalyzes the attachment of isoleucine to tRNA(Ile). As IleRS can inadvertently accommodate and process structurally similar amino acids such as valine, to avoid such errors it has two additional distinct tRNA(Ile)-dependent editing activities. One activity is designated as 'pretransfer' editing and involves the hydrolysis of activated Val-AMP. The other activity is designated 'posttransfer' editing and involves deacylation of mischarged Val-tRNA(Ile). The sequence is that of Isoleucine--tRNA ligase from Escherichia coli O45:K1 (strain S88 / ExPEC).